Here is a 637-residue protein sequence, read N- to C-terminus: Phospholipase B (637 aa).

Residues 1–19 form the signal peptide; it reads MSIATATFAFSLFATIAFA. A PLA2c domain is found at 46 to 572; it reads DCPSNVTWIR…DTWCWAGDDN (527 aa). N-linked (GlcNAc...) asparagine glycosylation is found at asparagine 50, asparagine 56, asparagine 122, asparagine 231, asparagine 246, asparagine 272, asparagine 314, asparagine 343, asparagine 387, asparagine 433, asparagine 481, asparagine 501, asparagine 528, asparagine 553, asparagine 572, asparagine 594, and asparagine 606.

It belongs to the lysophospholipase family. In terms of processing, N-glycosylated.

The protein resides in the secreted. It is found in the cell membrane. It carries out the reaction a 1-acyl-sn-glycero-3-phosphocholine + H2O = sn-glycerol 3-phosphocholine + a fatty acid + H(+). Inhibited by Fe(3+) ion. Functionally, exhibits phospholipase B (PLB), lysophospholipase (LPL) and lysophospholipase/transacylase (LPTA) activities. The polypeptide is Phospholipase B (PLB1) (Cryptococcus neoformans var. grubii serotype A (strain H99 / ATCC 208821 / CBS 10515 / FGSC 9487) (Filobasidiella neoformans var. grubii)).